The following is a 150-amino-acid chain: Ribosome maturation factor RimP (150 aa).

It belongs to the RimP family.

Its subcellular location is the cytoplasm. Functionally, required for maturation of 30S ribosomal subunits. This chain is Ribosome maturation factor RimP, found in Yersinia pestis bv. Antiqua (strain Antiqua).